Reading from the N-terminus, the 93-residue chain is Putative pterin-4-alpha-carbinolamine dehydratase (93 aa).

It belongs to the pterin-4-alpha-carbinolamine dehydratase family.

The enzyme catalyses (4aS,6R)-4a-hydroxy-L-erythro-5,6,7,8-tetrahydrobiopterin = (6R)-L-erythro-6,7-dihydrobiopterin + H2O. In Synechococcus sp. (strain WH7803), this protein is Putative pterin-4-alpha-carbinolamine dehydratase.